The primary structure comprises 369 residues: Dihydroorotate dehydrogenase (quinone) (369 aa).

FMN is bound by residues alanine 76–lysine 80 and threonine 100. Substrate is bound at residue lysine 80. Substrate is bound at residue asparagine 125–phenylalanine 129. Positions 154 and 187 each coordinate FMN. Asparagine 187 contacts substrate. The active-site Nucleophile is serine 190. Residue asparagine 192 participates in substrate binding. Residues lysine 232 and serine 260 each coordinate FMN. Asparagine 261–threonine 262 is a binding site for substrate. FMN is bound by residues glycine 282, glycine 311, and tyrosine 332–serine 333.

This sequence belongs to the dihydroorotate dehydrogenase family. Type 2 subfamily. In terms of assembly, monomer. It depends on FMN as a cofactor.

It localises to the cell membrane. It carries out the reaction (S)-dihydroorotate + a quinone = orotate + a quinol. Its pathway is pyrimidine metabolism; UMP biosynthesis via de novo pathway; orotate from (S)-dihydroorotate (quinone route): step 1/1. Catalyzes the conversion of dihydroorotate to orotate with quinone as electron acceptor. This Deinococcus radiodurans (strain ATCC 13939 / DSM 20539 / JCM 16871 / CCUG 27074 / LMG 4051 / NBRC 15346 / NCIMB 9279 / VKM B-1422 / R1) protein is Dihydroorotate dehydrogenase (quinone) (pyrD).